The sequence spans 322 residues: Ribosomal RNA small subunit methyltransferase H (322 aa).

Residues 47 to 49 (GGH), Asp-67, Phe-93, Asp-112, and Gln-119 each bind S-adenosyl-L-methionine.

The protein belongs to the methyltransferase superfamily. RsmH family.

Its subcellular location is the cytoplasm. It catalyses the reaction cytidine(1402) in 16S rRNA + S-adenosyl-L-methionine = N(4)-methylcytidine(1402) in 16S rRNA + S-adenosyl-L-homocysteine + H(+). In terms of biological role, specifically methylates the N4 position of cytidine in position 1402 (C1402) of 16S rRNA. This Stenotrophomonas maltophilia (strain K279a) protein is Ribosomal RNA small subunit methyltransferase H.